The chain runs to 473 residues: MAQHDFAPAWLNFPTPPSSTKSSLNFEKHSENFSWTENRYDVSRRRHNSSDGFDSGIGRPNGGNFGRKEKNGWRTHGRNGTENINHRGGYHGGNSRSRSSIFHSGKSQGLHENSIPDNETGRKEDKRERRQFEAEDFPSLNPEYEREPNQNKSLAAGVWDYPPNPKSRTPRMLVIKKGNTKDLQLSGFPVAGNLQSQPVKNGTGPSVYKGLVPKPAVPPTKPTQWKSQTKENKVGTSFSHESTYGVGNFNTFKSTAKNISPSTNSVKECNRSNSSSPVDKLNQQPRLTKLTRMRSDKKSEFLKALKRDRVEEEHEDESHAGSEKDDDSFNLHNSNTTHQERDINRNFDENEIPQENGNASMISQQIIRSSTFPQTDVLSSSLEAEHRLLKEMGWQEDSENDETCAPLTEDEMREFQVISEQLQKNGLRKNGILKNGLICDFKFGPWKNSTFKPTIENDDTETSSSDTSDDDDV.

Disordered regions lie at residues 1 to 25 (MAQH…SSLN), 44 to 170 (RRRH…SRTP), and 186 to 341 (SGFP…HQER). Serine 49 carries the phosphoserine modification. Position 87 is an omega-N-methylarginine (arginine 87). The segment covering 94–117 (NSRSRSSIFHSGKSQGLHENSIPD) has biased composition (polar residues). Positions 119–133 (ETGRKEDKRERRQFE) are enriched in basic and acidic residues. 2 stretches are compositionally biased toward polar residues: residues 193 to 204 (NLQSQPVKNGTG) and 248 to 286 (NFNT…QQPR). A phosphoserine mark is found at serine 274, serine 276, serine 322, and serine 381. Residues 293-329 (MRSDKKSEFLKALKRDRVEEEHEDESHAGSEKDDDSF) are compositionally biased toward basic and acidic residues. A disordered region spans residues 450-473 (TFKPTIENDDTETSSSDTSDDDDV). Acidic residues predominate over residues 456-473 (ENDDTETSSSDTSDDDDV).

This sequence belongs to the vasculin family. Interacts with GTF2B, GTF2F2, RNA polymerase II and TBP. Ubiquitously expressed (at protein level).

The protein localises to the nucleus. Functionally, functions as a GC-rich promoter-specific transactivating transcription factor. The chain is Vasculin (Gpbp1) from Mus musculus (Mouse).